Consider the following 197-residue polypeptide: UDP-N-acetylglucosamine transferase subunit alg13 (197 aa).

Positions 174–197 (VRGPDQKNQPTLEQVMSDEMGFVD) are disordered.

The protein belongs to the glycosyltransferase 28 family. In terms of assembly, heterodimer with alg14 to form a functional enzyme.

Its subcellular location is the endoplasmic reticulum. It catalyses the reaction an N-acetyl-alpha-D-glucosaminyl-diphospho-di-trans,poly-cis-dolichol + UDP-N-acetyl-alpha-D-glucosamine = an N,N'-diacetylchitobiosyl-diphospho-di-trans,poly-cis-dolichol + UDP + H(+). In terms of biological role, involved in protein N-glycosylation. Essential for the second step of the dolichol-linked oligosaccharide pathway. This Aspergillus fumigatus (strain ATCC MYA-4609 / CBS 101355 / FGSC A1100 / Af293) (Neosartorya fumigata) protein is UDP-N-acetylglucosamine transferase subunit alg13 (alg13).